The sequence spans 401 residues: MTRISVPAGQERNDGGISVPAGQERSDRGISVVLAGGGTAGHIEPAMAVADALTALDPDVRITALGTERGLETRLVPQRGYHLELITLVPLPRKLSADLFRLPMRVLRAVRQTRRILDEVSADVVVGFGGYVAVPAYLAARSLRTHRRVPVVVHEANASAGWANKVGARSAQRVLSAVPDPGLPHVEVVGVPVREAITSLDRMALRAEARAHFGFADDARVLLVFGGSQGAQSLNRAVAGAAEKLAEQGISVLHAHGPKNTLDLPAPRPGDPPYVAVPYLERMDLAYAAADLAVCRSGAMTVAEVSAVGLPAVYVPLPIGNGEQRLNALPVVEAGGGILVEDRSLTPEFVAETVPGLLNNADTLAAMTAAAALAGHPDAARRVAEVALEVARRARDLRTRR.

The segment at 1 to 24 (MTRISVPAGQERNDGGISVPAGQE) is disordered. Residues 39 to 41 (TAG), N157, R194, S228, and Q324 contribute to the UDP-N-acetyl-alpha-D-glucosamine site.

It belongs to the glycosyltransferase 28 family. MurG subfamily.

The protein localises to the cell membrane. It catalyses the reaction di-trans,octa-cis-undecaprenyl diphospho-N-acetyl-alpha-D-muramoyl-L-alanyl-D-glutamyl-meso-2,6-diaminopimeloyl-D-alanyl-D-alanine + UDP-N-acetyl-alpha-D-glucosamine = di-trans,octa-cis-undecaprenyl diphospho-[N-acetyl-alpha-D-glucosaminyl-(1-&gt;4)]-N-acetyl-alpha-D-muramoyl-L-alanyl-D-glutamyl-meso-2,6-diaminopimeloyl-D-alanyl-D-alanine + UDP + H(+). It participates in cell wall biogenesis; peptidoglycan biosynthesis. Cell wall formation. Catalyzes the transfer of a GlcNAc subunit on undecaprenyl-pyrophosphoryl-MurNAc-pentapeptide (lipid intermediate I) to form undecaprenyl-pyrophosphoryl-MurNAc-(pentapeptide)GlcNAc (lipid intermediate II). This chain is UDP-N-acetylglucosamine--N-acetylmuramyl-(pentapeptide) pyrophosphoryl-undecaprenol N-acetylglucosamine transferase, found in Mycolicibacterium vanbaalenii (strain DSM 7251 / JCM 13017 / BCRC 16820 / KCTC 9966 / NRRL B-24157 / PYR-1) (Mycobacterium vanbaalenii).